We begin with the raw amino-acid sequence, 116 residues long: NADPH-dependent 7-cyano-7-deazaguanine reductase (116 aa).

Cys-31 serves as the catalytic Thioimide intermediate. Asp-38 (proton donor) is an active-site residue. Substrate is bound by residues 53–55 (IEL) and 72–73 (YE).

It belongs to the GTP cyclohydrolase I family. QueF type 1 subfamily.

The protein localises to the cytoplasm. The catalysed reaction is 7-aminomethyl-7-carbaguanine + 2 NADP(+) = 7-cyano-7-deazaguanine + 2 NADPH + 3 H(+). Its pathway is tRNA modification; tRNA-queuosine biosynthesis. Its function is as follows. Catalyzes the NADPH-dependent reduction of 7-cyano-7-deazaguanine (preQ0) to 7-aminomethyl-7-deazaguanine (preQ1). The polypeptide is NADPH-dependent 7-cyano-7-deazaguanine reductase (Pelodictyon phaeoclathratiforme (strain DSM 5477 / BU-1)).